The following is a 406-amino-acid chain: Betaine--homocysteine S-methyltransferase 1 (406 aa).

Residues 11 to 314 (KGILERLNAG…YHIRAIAEEL (304 aa)) form the Hcy-binding domain. Lys40, Lys93, and Lys98 each carry N6-succinyllysine. Cys217 contacts Zn(2+). N6-succinyllysine occurs at positions 232 and 241. Zn(2+) is bound by residues Cys299 and Cys300. Ser330 carries the phosphoserine modification. An N6-succinyllysine mark is found at Lys340 and Lys377.

In terms of assembly, homotetramer. The cofactor is Zn(2+).

Its subcellular location is the cytoplasm. The protein localises to the cytosol. It localises to the nucleus. The enzyme catalyses L-homocysteine + glycine betaine = N,N-dimethylglycine + L-methionine. It participates in amine and polyamine degradation; betaine degradation; sarcosine from betaine: step 1/2. It functions in the pathway amino-acid biosynthesis; L-methionine biosynthesis via de novo pathway; L-methionine from L-homocysteine (BhmT route): step 1/1. In terms of biological role, involved in the regulation of homocysteine metabolism. Converts betaine and homocysteine to dimethylglycine and methionine, respectively. This reaction is also required for the irreversible oxidation of choline. This is Betaine--homocysteine S-methyltransferase 1 (BHMT) from Pongo abelii (Sumatran orangutan).